The primary structure comprises 237 residues: Zinc finger protein 22 (237 aa).

Residues 1–33 are disordered; the sequence is MRLGKPKGGISRSASQGKTYESKRKTARQRQKW. Lys-18 and Lys-23 each carry N6-acetyllysine. 5 C2H2-type zinc fingers span residues 55 to 82, 83 to 110, 111 to 138, 139 to 166, and 167 to 194; these read YKCTKCSKSFSQSSTLFQHKKIHTGKKS, HKCADCGKSFFQSSNLIQHRRIHTGEKP, YKCDECGERFKQSSNLIQHQRIHTGEKP, YCCDECGRCFSQSSHLIQHQRTHTGEKP, and YQCEECDKCFSQSSHLRQHMKVHKEKKS. The segment covering 188 to 217 has biased composition (basic residues); it reads VHKEKKSHKRGKNARAKTHPVSWKRGKGRK. A disordered region spans residues 188–218; the sequence is VHKEKKSHKRGKNARAKTHPVSWKRGKGRKA.

Belongs to the krueppel C2H2-type zinc-finger protein family. Highly expressed in the ameloblast layer of mandibular incisors, moderately expressed in submandibular gland, calvaria, kidney and lung, and expressed at low levels in brain and thymus.

The protein localises to the nucleus. Binds DNA through the consensus sequence 5'-CAATG-3'. May be involved in transcriptional regulation and may play a role in tooth formation. The protein is Zinc finger protein 22 (Znf22) of Rattus norvegicus (Rat).